We begin with the raw amino-acid sequence, 221 residues long: UPF0758 protein ECA0145 (221 aa).

Residues Ala-99–Ile-221 enclose the MPN domain. Positions 170, 172, and 183 each coordinate Zn(2+). Residues His-170–Asp-183 carry the JAMM motif motif.

This sequence belongs to the UPF0758 family. YicR subfamily.

The polypeptide is UPF0758 protein ECA0145 (Pectobacterium atrosepticum (strain SCRI 1043 / ATCC BAA-672) (Erwinia carotovora subsp. atroseptica)).